A 565-amino-acid polypeptide reads, in one-letter code: Pentatricopeptide repeat-containing protein At3g20730 (565 aa).

PPR repeat units follow at residues 12–46 (SPSL…GFCS), 47–77 (NLQL…ISKR), 78–112 (DVVS…DVKA), 113–147 (NQFT…NCAG), 148–178 (NLIV…MKER), 179–213 (DLVS…GKKP), 214–248 (DCFT…GFGR), 249–279 (SSAL…TKKR), 280–315 (DLLS…KTKM), 316–351 (DEVV…QIRF), 352–382 (DVAL…MKEK), 383–417 (DVRS…RIKP), 418–448 (NDVT…MINK), and 454–484 (REEH…KEGI). The type E motif; degenerate stretch occupies residues 491-565 (TWGAFLDACR…NKAPGYSLVY (75 aa)).

This sequence belongs to the PPR family. PCMP-E subfamily.

In Arabidopsis thaliana (Mouse-ear cress), this protein is Pentatricopeptide repeat-containing protein At3g20730 (PCMP-E94).